A 315-amino-acid chain; its full sequence is Ectopic P granules protein 4 (315 aa).

Helical transmembrane passes span 84 to 104 (IGFLVLWQVCILILGLFFSFF), 113 to 133 (IGYILIIPIFFASRIIQALWF), 146 to 166 (LPPPPVVPFSSMLAGTLISAL), 190 to 210 (IVYLHMALLNSMYCFDYFFDG), 221 to 241 (IFESHWPYFLGFGTPLALACS), and 242 to 262 (ISSNMFVNSVIFALLFPFFII).

Belongs to the EI24 family. In terms of tissue distribution, expressed in pharyngeal and body wall muscles and intestine cells.

The protein resides in the cytoplasm. It localises to the membrane. In terms of biological role, involved in autophagy. Thought to act in autophagasome and omegasome formation. The chain is Ectopic P granules protein 4 from Caenorhabditis elegans.